Reading from the N-terminus, the 205-residue chain is dTTP/UTP pyrophosphatase (205 aa).

Residue Asp-81 is the Proton acceptor of the active site.

It belongs to the Maf family. YhdE subfamily. A divalent metal cation serves as cofactor.

It is found in the cytoplasm. It catalyses the reaction dTTP + H2O = dTMP + diphosphate + H(+). The catalysed reaction is UTP + H2O = UMP + diphosphate + H(+). In terms of biological role, nucleoside triphosphate pyrophosphatase that hydrolyzes dTTP and UTP. May have a dual role in cell division arrest and in preventing the incorporation of modified nucleotides into cellular nucleic acids. The protein is dTTP/UTP pyrophosphatase of Agathobacter rectalis (strain ATCC 33656 / DSM 3377 / JCM 17463 / KCTC 5835 / VPI 0990) (Eubacterium rectale).